The following is a 199-amino-acid chain: uncharacterized protein (199 aa).

Residues 72–116 (EIYSEIENEESDIEEMSEEMKAFFAKTQEHRQKLKEQRAAEKRKE) adopt a coiled-coil conformation. Residues 98–117 (TQEHRQKLKEQRAAEKRKEG) are compositionally biased toward basic and acidic residues. The segment at 98 to 127 (TQEHRQKLKEQRAAEKRKEGQSSSKSQEEY) is disordered.

This is an uncharacterized protein from Caenorhabditis elegans.